A 622-amino-acid polypeptide reads, in one-letter code: Palmitoyltransferase ZDHHC13 (622 aa).

N-acetylmethionine is present on methionine 1. Residues methionine 1 to glutamate 291 are Cytoplasmic-facing. ANK repeat units follow at residues proline 43–proline 78, glutamate 81–glutamine 110, leucine 115–leucine 144, glutamate 148–methionine 177, asparagine 181–valine 211, histidine 216–isoleucine 245, and lysine 249–alanine 277. A helical membrane pass occupies residues leucine 292–phenylalanine 312. Residues asparagine 313–lysine 320 lie on the Lumenal side of the membrane. A helical transmembrane segment spans residues glycine 321–tyrosine 341. Topologically, residues lysine 342–leucine 347 are cytoplasmic. A helical transmembrane segment spans residues proline 348–phenylalanine 368. The Lumenal segment spans residues proline 369 to aspartate 370. The chain crosses the membrane as a helical span at residues leucine 371 to phenylalanine 391. Topologically, residues tyrosine 392–tyrosine 470 are cytoplasmic. Positions threonine 426 to phenylalanine 476 constitute a DHHC domain. Cysteine 456 acts as the S-palmitoyl cysteine intermediate in catalysis. Residues tyrosine 471–isoleucine 491 form a helical membrane-spanning segment. Over tyrosine 492–proline 518 the chain is Lumenal. The chain crosses the membrane as a helical span at residues tryptophan 519–leucine 539. The Cytoplasmic segment spans residues asparagine 540–valine 622.

The protein belongs to the DHHC palmitoyltransferase family. AKR/ZDHHC17 subfamily. In terms of assembly, interacts (via ANK repeats) with CLIP3. Interacts (via ANK repeats) with DNAJC5 (via C-terminus). Interacts (via ANK repeats) with HTT. Interacts (via ANK repeats) with MAP6. Interacts (via ANK repeats) with SNAP23. Interacts (via ANK repeats) with SNAP25. May interact (via ANK repeats) with SPRED2.

It is found in the golgi apparatus membrane. It localises to the cytoplasmic vesicle membrane. The catalysed reaction is L-cysteinyl-[protein] + hexadecanoyl-CoA = S-hexadecanoyl-L-cysteinyl-[protein] + CoA. Its function is as follows. Palmitoyltransferase that could catalyze the addition of palmitate onto various protein substrates. Palmitoyltransferase for HTT and GAD2. May play a role in Mg(2+) transport. The sequence is that of Palmitoyltransferase ZDHHC13 from Homo sapiens (Human).